Here is a 433-residue protein sequence, read N- to C-terminus: MDGIKLLLSIIILYFYTYINCAIAEPNLIDQVVAIVNNDIILESELKILRDSIQNYAKLNYQEQLEDNQLNKHIIDRLIIKKIIQQQAKLSHITIAETKLNKIIHDLTSSQNLSIAKLRHLMYSNRNIYDIYRAQLRQDLLIAEVLNSALHRRITILPQEVEFLAKKIAIRKNTTFNLSHMLIPLPEKPSRKQKNEAEALALFLMAQSEKQNDFRELAIKYSTDTQMLNSFSMIGIQHTKLPLILAKHLYGAQKGSVIGPIYSDIGIHILKVHDMIRTHMSNIPITEVYARHILLRTSVKRNDNQARVQLLNIARKINIGDISFSIVAKQISEDIISSQQGGDLGWNALNAFTPTFRKLLLSLNKGQLSIPVRSSQGWHLIQLQNIRQVENTTNKEAAYRILWHRKLAEIAHIWIQEQRDLAYIKIINHHDNR.

Positions 1–24 (MDGIKLLLSIIILYFYTYINCAIA) are cleaved as a signal peptide. 2 consecutive PpiC domains span residues 173-274 (NTTF…KVHD) and 285-385 (ITEV…QLQN).

The protein resides in the periplasm. It carries out the reaction [protein]-peptidylproline (omega=180) = [protein]-peptidylproline (omega=0). In terms of biological role, chaperone involved in the correct folding and assembly of outer membrane proteins. Recognizes specific patterns of aromatic residues and the orientation of their side chains, which are found more frequently in integral outer membrane proteins. May act in both early periplasmic and late outer membrane-associated steps of protein maturation. This chain is Chaperone SurA, found in Baumannia cicadellinicola subsp. Homalodisca coagulata.